The following is a 162-amino-acid chain: Superoxide dismutase [Cu-Zn] (162 aa).

The signal sequence occupies residues 1-20 (MNKSGIILIGTILFSSMAIA). Cu cation contacts are provided by H66, H68, and H83. A disulfide bridge connects residues C73 and C158. Zn(2+)-binding residues include H83, H92, H100, and D103. H137 is a Cu cation binding site.

The protein belongs to the Cu-Zn superoxide dismutase family. In terms of assembly, homodimer. Cu cation is required as a cofactor. It depends on Zn(2+) as a cofactor.

It localises to the periplasm. The enzyme catalyses 2 superoxide + 2 H(+) = H2O2 + O2. Destroys radicals which are normally produced within the cells and which are toxic to biological systems. This chain is Superoxide dismutase [Cu-Zn] (sodC), found in Legionella pneumophila.